Here is a 274-residue protein sequence, read N- to C-terminus: Ribosomal RNA small subunit methyltransferase A (274 aa).

S-adenosyl-L-methionine is bound by residues asparagine 28, leucine 30, glycine 55, glutamate 77, aspartate 103, and asparagine 122.

It belongs to the class I-like SAM-binding methyltransferase superfamily. rRNA adenine N(6)-methyltransferase family. RsmA subfamily.

It is found in the cytoplasm. It catalyses the reaction adenosine(1518)/adenosine(1519) in 16S rRNA + 4 S-adenosyl-L-methionine = N(6)-dimethyladenosine(1518)/N(6)-dimethyladenosine(1519) in 16S rRNA + 4 S-adenosyl-L-homocysteine + 4 H(+). Its function is as follows. Specifically dimethylates two adjacent adenosines (A1518 and A1519) in the loop of a conserved hairpin near the 3'-end of 16S rRNA in the 30S particle. May play a critical role in biogenesis of 30S subunits. This chain is Ribosomal RNA small subunit methyltransferase A, found in Rhizobium meliloti (strain 1021) (Ensifer meliloti).